The following is a 299-amino-acid chain: Ornithine carbamoyltransferase (299 aa).

Carbamoyl phosphate-binding positions include 52–55 (STRT), glutamine 79, arginine 103, and 130–133 (HPCQ). L-ornithine-binding positions include asparagine 161, aspartate 218, and 222–223 (SM). Carbamoyl phosphate is bound by residues 258 to 259 (CL) and arginine 286.

This sequence belongs to the aspartate/ornithine carbamoyltransferase superfamily. OTCase family.

The protein localises to the cytoplasm. It carries out the reaction carbamoyl phosphate + L-ornithine = L-citrulline + phosphate + H(+). The protein operates within amino-acid biosynthesis; L-arginine biosynthesis; L-arginine from L-ornithine and carbamoyl phosphate: step 1/3. Its function is as follows. Reversibly catalyzes the transfer of the carbamoyl group from carbamoyl phosphate (CP) to the N(epsilon) atom of ornithine (ORN) to produce L-citrulline. In Ruthia magnifica subsp. Calyptogena magnifica, this protein is Ornithine carbamoyltransferase.